A 1130-amino-acid polypeptide reads, in one-letter code: Integrin alpha-6 (1130 aa).

Positions M1–A23 are cleaved as a signal peptide. Topologically, residues F24–S1050 are extracellular. FG-GAP repeat units lie at residues E30–T95, N101–D166, D176–M229, E283–H339, L340–N402, V403–T458, and K459–N518. N78 is a glycosylation site (N-linked (GlcNAc...) asparagine). Cystine bridges form between C86–C94, C131–C154, and C175–C188. N-linked (GlcNAc...) asparagine glycosylation is found at N223 and N323. Ca(2+) is bound by residues D363, N365, D367, and D371. N-linked (GlcNAc...) asparagine glycosylation occurs at N409. Ca(2+) is bound by residues D425, N427, D429, Y431, D433, D480, D482, N484, Y486, and D488. 4 cysteine pairs are disulfide-bonded: C528/C535, C541/C601, C665/C671, and C765/C776. N-linked (GlcNAc...) asparagine glycans are attached at residues N770, N787, N930, and N966. Cystine bridges form between C920–C967 and C973–C978. N997 carries an N-linked (GlcNAc...) asparagine glycan. Residues G1051 to W1076 form a helical membrane-spanning segment. Residues V1059 and G1064 each carry the phosphoserine modification. Residues K1077–R1083 are interaction with HPS5. The Cytoplasmic segment spans residues K1077–S1130. A lipid anchor (S-palmitoyl cysteine; by DHHC3) is attached at C1078. The GFFKR motif signature appears at G1079 to R1083. Position 1103 is a phosphoserine (R1103).

The protein belongs to the integrin alpha chain family. In terms of assembly, heterodimer of an alpha and a beta subunit. The alpha subunit is composed of a heavy and a light chain linked by a disulfide bond. Alpha-6 associates with either beta-1 (ITGB1) or beta-4 (ITGB4) to form ITGA6:ITGB1 and ITGA6:ITGB4, respectively. ITGA6:ITGB1 is found in a complex with CD9; interaction takes place in oocytes and is involved in sperm-egg fusion. ITGA6:ITGB4 is found in a ternary complex with NRG1 and ERBB3. ITGA6:ITGB4 is found in a ternary complex with IGF1 and IGF1R. ITGA6:ITGB4 interacts with IGF2. Interacts with ADAM9. Interacts with RAB21. Interacts with MDK. ITGA6:ITGB1 interacts with MDK; this interaction mediates MDK-induced neurite outgrowth. Interacts with CD82; this interaction down-regulates ITGA6-mediated cell adhesion. Isoforms containing segment A, but not segment B, are the major targets for PMA-induced phosphorylation. Phosphorylation occurs on 'Ser-1103' of isoform alpha-6X1X2A. Phosphorylation is not required for the induction of integrin alpha-6A/beta-1 high affinity but may reduce the affinity for ligand. In terms of processing, undergoes PLAU-mediated cleavage at residues Arg-634-635-Arg in a time-dependent manner to produce processed integrin alpha-6 (alpha6p). Production of alpha6p enhances prostate cancer cell invasion and migration. Post-translationally, palmitoylation by DHHC3 enhances stability and cell surface expression. In terms of tissue distribution, integrin alpha-6/beta-4 is predominantly expressed by epithelia. Isoforms containing segment X1 are ubiquitously expressed. Isoforms containing segment X1X2 are expressed in heart, kidney, placenta, colon, duodenum, myoblasts and myotubes, and in a limited number of cell lines; they are always coexpressed with the ubiquitous isoform containing segment X1. In some tissues (e.g. Salivary gland), isoforms containing cytoplasmic segment A and isoforms containing segment B are detected while in others, only isoforms containing one cytoplasmic segment are found (segment A in epidermis and segment B in kidney). Processed integrin alpha-6: Expressed at low levels in normal prostate tissue with elevated levels in prostate cancer tissue (at protein level).

It localises to the cell membrane. Integrin alpha-6/beta-1 (ITGA6:ITGB1) is a receptor for laminin on platelets. Integrin alpha-6/beta-1 (ITGA6:ITGB1) is present in oocytes and is involved in sperm-egg fusion. Integrin alpha-6/beta-4 (ITGA6:ITGB4) is a receptor for laminin in epithelial cells and it plays a critical structural role in the hemidesmosome. ITGA6:ITGB4 binds to NRG1 (via EGF domain) and this binding is essential for NRG1-ERBB signaling. ITGA6:ITGB4 binds to IGF1 and this binding is essential for IGF1 signaling. ITGA6:ITGB4 binds to IGF2 and this binding is essential for IGF2 signaling. In Homo sapiens (Human), this protein is Integrin alpha-6 (ITGA6).